We begin with the raw amino-acid sequence, 245 residues long: MPNLQGRVAFVTGGNAGIGYHTVVFLAKAGAKVYFGARSASRAEAAVERMYRENPGLLHGQVNWLQVDMASMKSVLAGCDKFRASESKLNILIHNAAHEGREPSNMADSGVQITMQTNHLAVFAMTQELQPMLRTAAAEKDSDVRIVNVSSNAPSLTHSDEWRPDFSDPHGGDIRYPAGQADGFLAAMKRYSVSKMAMNLLTAELQARYDREGVPIMVISVCPGAVYFKPQVDTENVEEMMRQPT.

Ile18, Arg42, Asp68, and Asn95 together coordinate NADP(+). The Proton donor role is filled by Ser150.

This sequence belongs to the short-chain dehydrogenases/reductases (SDR) family.

It functions in the pathway mycotoxin biosynthesis. Short-chain dehydrogenase/reductase; part of the gene cluster that mediates the biosynthesis of the mycotoxin pyrichalasin H, a tyrosine-derived cytochalasan that inhibits the growth of rice seedlings, but also inhibits lymphocyte capping and actin polymerization and alters cell morphology. Pyrichalasin H is indicated as the responsible agent for the genus-specific pathogenicity of M.grisea toward crabgrass. The first step in the pathway is catalyzed by the O-methyltransferase pyiA which methylates free tyrosine to generate the precursor O-methyltyrosine. The hybrid PKS-NRPS pyiS, assisted by the enoyl reductase pyiC, are responsible for fusion of the O-methyltyrosine precursor and the polyketide backbone. The polyketide synthase module (PKS) of pyiS is responsible for the synthesis of the polyketide backbone and the downstream nonribosomal peptide synthetase (NRPS) amidates the carboxyl end of the polyketide with the O-methyltyrosine precursor. As the NRPS A-domain demonstrates substrate tolerance, pyiS can also use phenylalanine, tyrosine and even para-chlorophenylalanine as amino acid precursor, which leads to the production of novel cytochalasans, including halogenated cytochalasans. Because pyiS lacks a designated enoylreductase (ER) domain, the required activity is provided the enoyl reductase pyiC. Reduction by the hydrolyase pyiE leads to 1,5-dihydropyrrolone, which is substrate for dehydration and intra-molecular Diels-Alder cyclization by the Diels-Alderase pyiF to yield the required isoindolone-fused macrocycle. The tailoring cytochrome P450 monooxygenases piyD and piyG catalyze the hydroxylation at C-18 and C-7, respectivily, whereas the short-chain dehydrogenase/reductase pyiH reduces the carbonyl at C-21 in preparation for the transfer of an acetyl group by the acetyltransferase pyiB. These 3 reactions whose order is not clear yet, lead to the production of O-methylpyrichalasin J, a deacetylated pyrichalasin H. Finally, pyiB to converts O-methylpyrichalasin J into the final product pyrichalasin H via acetylation of C-21. In Pyricularia grisea (Crabgrass-specific blast fungus), this protein is Short-chain dehydrogenase/reductase pyiH.